A 260-amino-acid chain; its full sequence is Proteasome subunit alpha (260 aa).

It belongs to the peptidase T1A family. As to quaternary structure, the 20S proteasome core is composed of 14 alpha and 14 beta subunits that assemble into four stacked heptameric rings, resulting in a barrel-shaped structure. The two inner rings, each composed of seven catalytic beta subunits, are sandwiched by two outer rings, each composed of seven alpha subunits. The catalytic chamber with the active sites is on the inside of the barrel. Has a gated structure, the ends of the cylinder being occluded by the N-termini of the alpha-subunits. Is capped at one or both ends by the proteasome regulatory ATPase, PAN.

Its subcellular location is the cytoplasm. Its activity is regulated as follows. The formation of the proteasomal ATPase PAN-20S proteasome complex, via the docking of the C-termini of PAN into the intersubunit pockets in the alpha-rings, triggers opening of the gate for substrate entry. Interconversion between the open-gate and close-gate conformations leads to a dynamic regulation of the 20S proteasome proteolysis activity. Functionally, component of the proteasome core, a large protease complex with broad specificity involved in protein degradation. The protein is Proteasome subunit alpha of Thermococcus onnurineus (strain NA1).